A 157-amino-acid chain; its full sequence is UPF0251 protein CLM_1546 (157 aa).

The protein belongs to the UPF0251 family.

This chain is UPF0251 protein CLM_1546, found in Clostridium botulinum (strain Kyoto / Type A2).